The chain runs to 212 residues: Pyridoxine/pyridoxamine 5'-phosphate oxidase (212 aa).

Residues 57-62, 72-73, Arg-78, Lys-79, and Gln-101 contribute to the FMN site; these read RMVLLK and YT. Lys-62 lines the substrate pocket. The substrate site is built by Tyr-119, Arg-123, and Ser-127. FMN is bound by residues 136–137 and Trp-181; that span reads QS. 187–189 is a binding site for substrate; sequence RLH. Arg-191 is a binding site for FMN.

Belongs to the pyridoxamine 5'-phosphate oxidase family. As to quaternary structure, homodimer. FMN serves as cofactor.

The catalysed reaction is pyridoxamine 5'-phosphate + O2 + H2O = pyridoxal 5'-phosphate + H2O2 + NH4(+). The enzyme catalyses pyridoxine 5'-phosphate + O2 = pyridoxal 5'-phosphate + H2O2. It participates in cofactor metabolism; pyridoxal 5'-phosphate salvage; pyridoxal 5'-phosphate from pyridoxamine 5'-phosphate: step 1/1. It functions in the pathway cofactor metabolism; pyridoxal 5'-phosphate salvage; pyridoxal 5'-phosphate from pyridoxine 5'-phosphate: step 1/1. Catalyzes the oxidation of either pyridoxine 5'-phosphate (PNP) or pyridoxamine 5'-phosphate (PMP) into pyridoxal 5'-phosphate (PLP). The sequence is that of Pyridoxine/pyridoxamine 5'-phosphate oxidase from Erythrobacter litoralis (strain HTCC2594).